The chain runs to 358 residues: Histidinol-phosphate aminotransferase (358 aa).

K218 carries the N6-(pyridoxal phosphate)lysine modification.

Belongs to the class-II pyridoxal-phosphate-dependent aminotransferase family. Histidinol-phosphate aminotransferase subfamily. As to quaternary structure, homodimer. Pyridoxal 5'-phosphate serves as cofactor.

The enzyme catalyses L-histidinol phosphate + 2-oxoglutarate = 3-(imidazol-4-yl)-2-oxopropyl phosphate + L-glutamate. The protein operates within amino-acid biosynthesis; L-histidine biosynthesis; L-histidine from 5-phospho-alpha-D-ribose 1-diphosphate: step 7/9. In Dehalococcoides mccartyi (strain ATCC BAA-2266 / KCTC 15142 / 195) (Dehalococcoides ethenogenes (strain 195)), this protein is Histidinol-phosphate aminotransferase.